Consider the following 596-residue polypeptide: Meiosis-specific protein ASY1 (596 aa).

The region spanning 15–228 is the HORMA domain; it reads QDSLLLTRNL…SKHLVLTLKV (214 aa). Positions 235–303 are disordered; the sequence is CEDENDDMQD…NTQDPAENEQ (69 aa). Over residues 282–295 the composition is skewed to acidic residues; it reads QDDDDGEVDEDDNT. Residues 351–449 enclose the SWIRM domain; the sequence is SKTGKDMYIK…ASSNRRLGKR (99 aa). The segment at 562–596 is disordered; sequence TVNCSQASQDRRGRKTSMVREPILQYSKRQKSQAN.

In terms of assembly, interacts with ASY3.

It localises to the chromosome. Its subcellular location is the nucleus. Required for normal meiosis in male and female gametophytes. Plays a crucial role in coordinating the activity of DMC1, a key member of the homologous recombination machinery. Acts at the interface between the developing chromosome axes and the recombination machinery to ensure DMC1-mediated interhomolog recombination. The protein is Meiosis-specific protein ASY1 of Arabidopsis thaliana (Mouse-ear cress).